The following is a 381-amino-acid chain: Creatine kinase M-type (381 aa).

One can recognise a Phosphagen kinase N-terminal domain in the interval 11 to 98 (KLNYKPEEEY…FDPIISDRHG (88 aa)). A Phosphagen kinase C-terminal domain is found at 125–367 (YVLSSRVRTG…KLMVEMEKKL (243 aa)). 128-132 (SSRVR) contributes to the ATP binding site. At Ser-164 the chain carries Phosphoserine. Thr-166 carries the post-translational modification Phosphothreonine. Ser-178 is subject to Phosphoserine. Position 180 is a phosphothreonine (Thr-180). His-191 contacts ATP. Ser-199 bears the Phosphoserine mark. 2 residues coordinate ATP: Arg-236 and Arg-292. Phosphothreonine occurs at positions 313 and 322. ATP contacts are provided by residues 320–325 (RGTGGV) and Asp-335. Ser-372 bears the Phosphoserine mark.

The protein belongs to the ATP:guanido phosphotransferase family. As to quaternary structure, dimer of identical or non-identical chains, which can be either B (brain type) or M (muscle type). With MM being the major form in skeletal muscle and myocardium, MB existing in myocardium, and BB existing in many tissues, especially brain.

It is found in the cytoplasm. The enzyme catalyses creatine + ATP = N-phosphocreatine + ADP + H(+). In terms of biological role, reversibly catalyzes the transfer of phosphate between ATP and various phosphogens (e.g. creatine phosphate). Creatine kinase isoenzymes play a central role in energy transduction in tissues with large, fluctuating energy demands, such as skeletal muscle, heart, brain and spermatozoa. The sequence is that of Creatine kinase M-type (CKM) from Homo sapiens (Human).